The chain runs to 555 residues: MSSDLEIARAAKLRPIATVADEAKIPAEALHSYGLHVAKIDTSLLPKKDRPAKLVLVTAINPTPAGEGKTTTTIGLGDALRRLGKACVIALREPSLGPCFGTKGGATGGGYAQIVPMERINLHLTGDFHAITSAHNLLAALIDNHLYWGAEPKIDSRKVAWRRVLDMNDRALRQIVVGLGGGGNGYPRETGFDITAASEIMAIFCLSKDLADLQQRLAQIIVAQDVNKQPVRADALQAVGAMTVLLKDALMPNLVQTLEGTPTFVHGGPFANIAHGCNSVAATLAAMQLGDYVVTEAGFGADLGAEKFLDIKCRQAGIAPSAAVIVATARALKSHGGVAPADLNKENLDALKAGLANLGRHIANVKKFGLPVVVAINHFLSDTEAEQELIAHTCRDEYGVEAIDCRHWAAGGKGALALAEKVIALVEGGTAQFKMLYEDTLPLIEKMRRIAQEIYGAADISLDAKAKKQLADIEAQGFGHFPVCVAKTQYSFAADPKLLGAPTGHIVPIREVRLSAGAGFVVMICGDIMTMPGLSRQPAAWKIGLDAQGNIEGLF.

Residue 63–70 (TPAGEGKT) participates in ATP binding.

This sequence belongs to the formate--tetrahydrofolate ligase family.

The catalysed reaction is (6S)-5,6,7,8-tetrahydrofolate + formate + ATP = (6R)-10-formyltetrahydrofolate + ADP + phosphate. The protein operates within one-carbon metabolism; tetrahydrofolate interconversion. The sequence is that of Formate--tetrahydrofolate ligase from Beijerinckia indica subsp. indica (strain ATCC 9039 / DSM 1715 / NCIMB 8712).